Reading from the N-terminus, the 229-residue chain is Potassium/proton antiporter CemA (229 aa).

A run of 3 helical transmembrane segments spans residues 7–27, 106–126, and 189–209; these read LTPL…SISF, IILH…YSIL, and IISG…KYWI.

It belongs to the CemA family.

Its subcellular location is the plastid. The protein resides in the chloroplast inner membrane. It carries out the reaction K(+)(in) + H(+)(out) = K(+)(out) + H(+)(in). Contributes to K(+)/H(+) antiport activity by supporting proton efflux to control proton extrusion and homeostasis in chloroplasts in a light-dependent manner to modulate photosynthesis. Prevents excessive induction of non-photochemical quenching (NPQ) under continuous-light conditions. Indirectly promotes efficient inorganic carbon uptake into chloroplasts. This Liriodendron tulipifera (Tuliptree) protein is Potassium/proton antiporter CemA.